Reading from the N-terminus, the 377-residue chain is MPSLVRRFQHASTEEQPFELNIQMESPPLVMYGNPDVSSGALASGLAKLTVFPADLKCESIVMEFVRIISTKRPLRDSCPDCKAQVEAFEKWEFSKEPTVYTHGTHTWPFTFIIPGHFPQTTNSPFINVTYILKTRVKIPSQPDFVFEYPLNLKRSIVTNADKIAQRLFPPTSLIALLELPPVIHPLSCVPVEFQLTGVKPENSKVGWRLTKISWRIEEQIKAQINGCSTHTGTKKPYIFKETRLLGNNEHKSGWKEDGDRIIFEIPISTSLLSKPICDVSFDGQFSLYIAHQLILETIVVEVMNSHPINSNARILRMKVNLPLTERGGLGVSWDEECPPMFNSVGPSPPAYEQVARSSPTDIPLPPPSCPTNVQRD.

Residues 345 to 377 are disordered; the sequence is VGPSPPAYEQVARSSPTDIPLPPPSCPTNVQRD.

This is an uncharacterized protein from Schizosaccharomyces pombe (strain 972 / ATCC 24843) (Fission yeast).